The sequence spans 265 residues: Tryptophan synthase alpha chain (265 aa).

Residues Glu49 and Glu60 each act as proton acceptor in the active site.

It belongs to the TrpA family. In terms of assembly, tetramer of two alpha and two beta chains.

The enzyme catalyses (1S,2R)-1-C-(indol-3-yl)glycerol 3-phosphate + L-serine = D-glyceraldehyde 3-phosphate + L-tryptophan + H2O. Its pathway is amino-acid biosynthesis; L-tryptophan biosynthesis; L-tryptophan from chorismate: step 5/5. Its function is as follows. The alpha subunit is responsible for the aldol cleavage of indoleglycerol phosphate to indole and glyceraldehyde 3-phosphate. This Herminiimonas arsenicoxydans protein is Tryptophan synthase alpha chain.